The sequence spans 574 residues: Efflux pump FUB11 (574 aa).

Residues 1 to 44 (MAIDPQPSSPSLSSETIANDTIGNDNNVNEPSVEPKTQEHQHTV) form a disordered region. A compositionally biased stretch (polar residues) spans 9–30 (SPSLSSETIANDTIGNDNNVNE). N-linked (GlcNAc...) asparagine glycosylation is present at asparagine 19. The next 11 membrane-spanning stretches (helical) occupy residues 116–136 (VATL…LIWA), 148–168 (FFFT…AGSI), 176–196 (FLTG…IADM), 208–228 (MFSG…GFLG), 235–255 (WLHG…TVFI), 318–338 (IYIS…PIVF), 348–368 (IGGL…ISFA), 394–414 (AIMG…TTFA), 419–439 (IVPI…FMAL), 449–469 (IFAA…GAAF), and 484–504 (WASS…FLFY). Positions 552–574 (HNSHTSATHSHGHRRSLSCTRSV) are disordered.

It belongs to the major facilitator superfamily. DHA1 family. Polyamines/proton antiporter (TC 2.A.1.2.16) subfamily.

Its subcellular location is the cell membrane. Its function is as follows. Efflux pump involved in export of fusaric acid, a mycotoxin with low to moderate toxicity to animals and humans, but with high phytotoxic properties. Constitutes a self-protecting mechanism of the fungus against critical levels of fusaric acid within the cell. The chain is Efflux pump FUB11 from Gibberella fujikuroi (strain CBS 195.34 / IMI 58289 / NRRL A-6831) (Bakanae and foot rot disease fungus).